The primary structure comprises 50 residues: Sperm protamine P1 (50 aa).

2 disulfides stabilise this stretch: Cys7–Cys15 and Cys39–Cys47.

Belongs to the protamine P1 family. Cross-linked by interchain disulfide bonds around the DNA-helix. Testis.

Its subcellular location is the nucleus. The protein resides in the chromosome. Functionally, protamines substitute for histones in the chromatin of sperm during the haploid phase of spermatogenesis. They compact sperm DNA into a highly condensed, stable and inactive complex. The protein is Sperm protamine P1 (PRM1) of Sus scrofa (Pig).